The chain runs to 426 residues: Glucose-6-phosphate isomerase (426 aa).

Glutamate 282 (proton donor) is an active-site residue. Catalysis depends on residues histidine 303 and lysine 417.

It belongs to the GPI family.

The protein localises to the cytoplasm. The catalysed reaction is alpha-D-glucose 6-phosphate = beta-D-fructose 6-phosphate. It functions in the pathway carbohydrate biosynthesis; gluconeogenesis. Its pathway is carbohydrate degradation; glycolysis; D-glyceraldehyde 3-phosphate and glycerone phosphate from D-glucose: step 2/4. In terms of biological role, catalyzes the reversible isomerization of glucose-6-phosphate to fructose-6-phosphate. The protein is Glucose-6-phosphate isomerase of Aster yellows witches'-broom phytoplasma (strain AYWB).